Here is a 596-residue protein sequence, read N- to C-terminus: mRNA export factor mex67 (596 aa).

Residues Ser-128, Ser-130, and Ser-133 each carry the phosphoserine modification. LRR repeat units follow at residues 215 to 236, 241 to 262, and 263 to 282; these read DVISVSLSDNNLQSVTAVTTLA, KLLNLSLANNRITSLSDLDPWS, and PKTKLPELQELVLVGNPIVT. One can recognise an LRRCT domain in the interval 283-338; sequence TFANRAMDYQREMVSRFPKLRLLDGNSINSEIIASQSTVPFPVYQSFFDKVETEQI. The region spanning 338 to 499 is the NTF2 domain; sequence IVNSFLAAFF…ILIINDLLVI (162 aa). Residues 543–596 enclose the TAP-C domain; sequence DTRQQIVLKIKAETGLNDYYAHMCCEQNNWDYNSALASFLELKSRNVIPAEAFS.

This sequence belongs to the NXF family. Interacts with mlo3 and rae1.

The protein resides in the nucleus. It localises to the cytoplasm. Functionally, involved in the export of mRNA from the nucleus to the cytoplasm. The chain is mRNA export factor mex67 (mex67) from Schizosaccharomyces pombe (strain 972 / ATCC 24843) (Fission yeast).